The following is a 185-amino-acid chain: Pyruvate/ketoisovalerate oxidoreductases common subunit gamma (185 aa).

In terms of assembly, heterotetramer of one alpha, one beta, one delta and one gamma chain.

It carries out the reaction 2 oxidized [2Fe-2S]-[ferredoxin] + pyruvate + CoA = 2 reduced [2Fe-2S]-[ferredoxin] + acetyl-CoA + CO2 + H(+). The enzyme catalyses 3-methyl-2-oxobutanoate + 2 oxidized [2Fe-2S]-[ferredoxin] + CoA = 2-methylpropanoyl-CoA + 2 reduced [2Fe-2S]-[ferredoxin] + CO2 + H(+). This Pyrococcus abyssi (strain GE5 / Orsay) protein is Pyruvate/ketoisovalerate oxidoreductases common subunit gamma (porG).